We begin with the raw amino-acid sequence, 210 residues long: 23.5 kDa heat shock protein, mitochondrial (210 aa).

The N-terminal 20 residues, 1 to 20 (MASSSALALRRLLSSSTVAV), are a transit peptide targeting the mitochondrion. Residues 102–210 (MGASGVRRGW…RNNIRHINVD (109 aa)) enclose the sHSP domain.

Belongs to the small heat shock protein (HSP20) family. May form oligomeric structures.

It localises to the mitochondrion. This Arabidopsis thaliana (Mouse-ear cress) protein is 23.5 kDa heat shock protein, mitochondrial (HSP23.5).